The primary structure comprises 369 residues: tRNA/tmRNA (uracil-C(5))-methyltransferase (369 aa).

The S-adenosyl-L-methionine site is built by Gln-190, Tyr-218, Asn-223, Glu-239, and Asp-301. Cys-326 serves as the catalytic Nucleophile. Residue Glu-360 is the Proton acceptor of the active site.

This sequence belongs to the class I-like SAM-binding methyltransferase superfamily. RNA M5U methyltransferase family. TrmA subfamily.

It catalyses the reaction uridine(54) in tRNA + S-adenosyl-L-methionine = 5-methyluridine(54) in tRNA + S-adenosyl-L-homocysteine + H(+). It carries out the reaction uridine(341) in tmRNA + S-adenosyl-L-methionine = 5-methyluridine(341) in tmRNA + S-adenosyl-L-homocysteine + H(+). Dual-specificity methyltransferase that catalyzes the formation of 5-methyluridine at position 54 (m5U54) in all tRNAs, and that of position 341 (m5U341) in tmRNA (transfer-mRNA). In Vibrio vulnificus (strain CMCP6), this protein is tRNA/tmRNA (uracil-C(5))-methyltransferase.